Reading from the N-terminus, the 333-residue chain is UDP-3-O-acylglucosamine N-acyltransferase 2 (333 aa).

H243 functions as the Proton acceptor in the catalytic mechanism.

This sequence belongs to the transferase hexapeptide repeat family. LpxD subfamily. In terms of assembly, homotrimer.

The enzyme catalyses a UDP-3-O-[(3R)-3-hydroxyacyl]-alpha-D-glucosamine + a (3R)-hydroxyacyl-[ACP] = a UDP-2-N,3-O-bis[(3R)-3-hydroxyacyl]-alpha-D-glucosamine + holo-[ACP] + H(+). It participates in bacterial outer membrane biogenesis; LPS lipid A biosynthesis. Functionally, catalyzes the N-acylation of UDP-3-O-acylglucosamine using 3-hydroxyacyl-ACP as the acyl donor. Is involved in the biosynthesis of lipid A, a phosphorylated glycolipid that anchors the lipopolysaccharide to the outer membrane of the cell. This chain is UDP-3-O-acylglucosamine N-acyltransferase 2, found in Koribacter versatilis (strain Ellin345).